We begin with the raw amino-acid sequence, 315 residues long: MSKPLRIIFAGTPDFAARHLSALIDSHHEVIGVYTQPDRPAGRGKKLTASPVKELALEHNIPVFQPENFKSDEAKQELADQNADLMVVVAYGLLLPQAVLDTPKLGCINVHGSILPRWRGAAPIQRSIWAGDAETGVTIMQMDIGLDTGDMLKIATLPIEATDTSASMYDKLAELGPVALVDCLSDIADGSAIAQKQDDELANYAKKLSKEEAKIDWTMDAIAIERCVRAFNPWPMSHFSVEDKAIKVWQSRVESYTGDATPGTIIQADKTGIYVATGSDAIVFEQLQVPGKKAMGVQDILNSRKEWFEVGNTLN.

113-116 (SILP) lines the (6S)-5,6,7,8-tetrahydrofolate pocket.

The protein belongs to the Fmt family.

It catalyses the reaction L-methionyl-tRNA(fMet) + (6R)-10-formyltetrahydrofolate = N-formyl-L-methionyl-tRNA(fMet) + (6S)-5,6,7,8-tetrahydrofolate + H(+). Its function is as follows. Attaches a formyl group to the free amino group of methionyl-tRNA(fMet). The formyl group appears to play a dual role in the initiator identity of N-formylmethionyl-tRNA by promoting its recognition by IF2 and preventing the misappropriation of this tRNA by the elongation apparatus. This is Methionyl-tRNA formyltransferase from Aliivibrio fischeri (strain MJ11) (Vibrio fischeri).